Here is a 136-residue protein sequence, read N- to C-terminus: Classical arabinogalactan protein 26 (136 aa).

An N-terminal signal peptide occupies residues 1 to 21 (MSVSLFTAFTVLSLCLHTSTS). A disordered region spans residues 38 to 95 (APSSFSASTPAMSPDTSPLFPTPGSSEMSPSPSESSIMPTIPSSLSPPNPDAVTPDPL). A compositionally biased stretch (polar residues) spans 40–53 (SSFSASTPAMSPDT). Residues 59–81 (TPGSSEMSPSPSESSIMPTIPSS) show a composition bias toward low complexity. S108 carries GPI-anchor amidated serine lipidation. Positions 109 to 136 (SSVCLVSSQLSSLLLVLLMLLLAFCSFF) are cleaved as a propeptide — removed in mature form.

Belongs to the classical AGP family. O-glycosylated on the hydroxyproline residues.

It is found in the cell membrane. In terms of biological role, proteoglycan that seems to be implicated in diverse developmental roles such as differentiation, cell-cell recognition, embryogenesis and programmed cell death. This is Classical arabinogalactan protein 26 (AGP26) from Arabidopsis thaliana (Mouse-ear cress).